The sequence spans 505 residues: ATP synthase subunit alpha (505 aa).

169 to 176 (GDRQTGKT) contacts ATP.

The protein belongs to the ATPase alpha/beta chains family. As to quaternary structure, F-type ATPases have 2 components, CF(1) - the catalytic core - and CF(0) - the membrane proton channel. CF(1) has five subunits: alpha(3), beta(3), gamma(1), delta(1), epsilon(1). CF(0) has three main subunits: a(1), b(2) and c(9-12). The alpha and beta chains form an alternating ring which encloses part of the gamma chain. CF(1) is attached to CF(0) by a central stalk formed by the gamma and epsilon chains, while a peripheral stalk is formed by the delta and b chains.

Its subcellular location is the cell membrane. It carries out the reaction ATP + H2O + 4 H(+)(in) = ADP + phosphate + 5 H(+)(out). Produces ATP from ADP in the presence of a proton gradient across the membrane. The alpha chain is a regulatory subunit. This chain is ATP synthase subunit alpha, found in Alkaliphilus metalliredigens (strain QYMF).